A 69-amino-acid chain; its full sequence is Cytochrome c oxidase subunit 8A, mitochondrial (69 aa).

Residues 1-25 constitute a mitochondrion transit peptide; that stretch reads MSVLTPLLLRGLTGSARRLPVPRAQ. The SIFI-degron motif lies at 2–19; sequence SVLTPLLLRGLTGSARRL. Residues 26-36 are Mitochondrial matrix-facing; it reads VHSMPPEQKLG. A helical transmembrane segment spans residues 37 to 60; that stretch reads VLELAIGFTSCLVTFLLPAGWILS. Topologically, residues 61–69 are mitochondrial intermembrane; that stretch reads HLDSYKKRG.

The protein belongs to the cytochrome c oxidase VIII family. In terms of assembly, component of the cytochrome c oxidase (complex IV, CIV), a multisubunit enzyme composed of 14 subunits. The complex is composed of a catalytic core of 3 subunits MT-CO1, MT-CO2 and MT-CO3, encoded in the mitochondrial DNA, and 11 supernumerary subunits COX4I, COX5A, COX5B, COX6A, COX6B, COX6C, COX7A, COX7B, COX7C, COX8 and NDUFA4, which are encoded in the nuclear genome. The complex exists as a monomer or a dimer and forms supercomplexes (SCs) in the inner mitochondrial membrane with NADH-ubiquinone oxidoreductase (complex I, CI) and ubiquinol-cytochrome c oxidoreductase (cytochrome b-c1 complex, complex III, CIII), resulting in different assemblies (supercomplex SCI(1)III(2)IV(1) and megacomplex MCI(2)III(2)IV(2)). Post-translationally, in response to mitochondrial stress, the precursor protein is ubiquitinated by the SIFI complex in the cytoplasm before mitochondrial import, leading to its degradation. Within the SIFI complex, UBR4 initiates ubiquitin chain that are further elongated or branched by KCMF1.

The protein resides in the mitochondrion inner membrane. Its pathway is energy metabolism; oxidative phosphorylation. Functionally, component of the cytochrome c oxidase, the last enzyme in the mitochondrial electron transport chain which drives oxidative phosphorylation. The respiratory chain contains 3 multisubunit complexes succinate dehydrogenase (complex II, CII), ubiquinol-cytochrome c oxidoreductase (cytochrome b-c1 complex, complex III, CIII) and cytochrome c oxidase (complex IV, CIV), that cooperate to transfer electrons derived from NADH and succinate to molecular oxygen, creating an electrochemical gradient over the inner membrane that drives transmembrane transport and the ATP synthase. Cytochrome c oxidase is the component of the respiratory chain that catalyzes the reduction of oxygen to water. Electrons originating from reduced cytochrome c in the intermembrane space (IMS) are transferred via the dinuclear copper A center (CU(A)) of subunit 2 and heme A of subunit 1 to the active site in subunit 1, a binuclear center (BNC) formed by heme A3 and copper B (CU(B)). The BNC reduces molecular oxygen to 2 water molecules using 4 electrons from cytochrome c in the IMS and 4 protons from the mitochondrial matrix. This Saimiri sciureus (Common squirrel monkey) protein is Cytochrome c oxidase subunit 8A, mitochondrial (COX8A).